A 99-amino-acid chain; its full sequence is Small ribosomal subunit protein bS20 (99 aa).

Positions 1-20 (MASAKPKKKNPRLASGRKRA) are enriched in basic residues. The segment at 1-29 (MASAKPKKKNPRLASGRKRARQDVKLNAA) is disordered.

This sequence belongs to the bacterial ribosomal protein bS20 family.

Binds directly to 16S ribosomal RNA. The chain is Small ribosomal subunit protein bS20 from Paracidovorax citrulli (strain AAC00-1) (Acidovorax citrulli).